Consider the following 244-residue polypeptide: Sortase B (244 aa).

The Cytoplasmic segment spans residues 1–6; the sequence is MRMKRF. The chain crosses the membrane as a helical span at residues 7–24; the sequence is LTIVQILLVVIIIIFGYK. Residues 25–244 are Extracellular-facing; it reads IVQTYIEDKQ…VVVAKIIKVS (220 aa). Cys223 functions as the Acyl-thioester intermediate in the catalytic mechanism.

Belongs to the bacterial sortase family. Class B subfamily.

The protein resides in the cell membrane. The catalysed reaction is The enzyme catalyzes a cell wall sorting reaction in which a surface protein with a sorting signal containing a NPXTN motif is cleaved between the Thr and Asn residue. The resulting threonine carboxyl end of the protein is covalently attached to a pentaglycine cross-bridge of peptidoglycan.. Its activity is regulated as follows. Inhibited by MTSET (2-(Trimethylammonium)-ethyl-methanethiosulfonate) and E64 ([n- (l-3-trans-carboxyoxirane-2-carbonyl)-l-leucyl]-amido(4-guanido)butane). Inhibited by coptisine. In terms of biological role, transpeptidase that anchors surface proteins to the cell wall. Recognizes and modifies its substrate by proteolytic cleavage of a C-terminal sorting signal. Following cleavage, a covalent intermediate is formed via a thioester bond between the sortase and its substrate, which is then transferred and covalently attached to the cell wall. This sortase recognizes an Asn-Pro-Gln-Thr-Asn (NPQTN) motif in IsdC, which is cleaved by the sortase between the threonine and aspargine residues; may only have 1 substrate in this bacterium. May be dedicated to the process of iron acquisition during bacterial infection. The protein is Sortase B of Staphylococcus aureus (strain NCTC 8325 / PS 47).